The sequence spans 148 residues: NTR domain-containing protein (148 aa).

Residues 1–26 (MVCRFSYVQVVLILVVLSVIISWANA) form the signal peptide. 3 disulfides stabilise this stretch: Cys27-Cys96, Cys29-Cys122, and Cys40-Cys146. Residues 27 to 146 (CSCFPPDETR…LQLFNDPQWC (120 aa)) form the NTR domain.

As to expression, prismatic layer of shell (at protein level). Expressed primarily in the mantle with highest level in the mantle edge and lower level in the mantle pallium.

The protein resides in the secreted. In Margaritifera margaritifera (Freshwater pearl mussel), this protein is NTR domain-containing protein.